A 171-amino-acid chain; its full sequence is MVVQPDIPGDNDPGMGRRLGVDVGTVRIGLAMSDSGARMAMPFETLARETGLKDSDKQDIDRIAEVICDNHIVEVVVGLPRDLKGNGSKSVKHAKDVAFRIRRRMHKNGWEHVAVKMADERLTTVVATQALRASGVSEKKGRRVVDQAAAVEILQSWLDARINVLENRTIP.

This sequence belongs to the YqgF nuclease family.

It is found in the cytoplasm. Functionally, could be a nuclease involved in processing of the 5'-end of pre-16S rRNA. In Corynebacterium diphtheriae (strain ATCC 700971 / NCTC 13129 / Biotype gravis), this protein is Putative pre-16S rRNA nuclease.